A 201-amino-acid chain; its full sequence is IMP cyclohydrolase (201 aa).

It belongs to the archaeal IMP cyclohydrolase family.

The catalysed reaction is IMP + H2O = 5-formamido-1-(5-phospho-D-ribosyl)imidazole-4-carboxamide. Its pathway is purine metabolism; IMP biosynthesis via de novo pathway; IMP from 5-formamido-1-(5-phospho-D-ribosyl)imidazole-4-carboxamide: step 1/1. Its function is as follows. Catalyzes the cyclization of 5-formylamidoimidazole-4-carboxamide ribonucleotide to IMP. This is IMP cyclohydrolase from Methanococcus maripaludis (strain DSM 14266 / JCM 13030 / NBRC 101832 / S2 / LL).